Consider the following 160-residue polypeptide: S-ribosylhomocysteine lyase (160 aa).

Positions 57, 61, and 127 each coordinate Fe cation.

Belongs to the LuxS family. As to quaternary structure, homodimer. Requires Fe cation as cofactor.

The catalysed reaction is S-(5-deoxy-D-ribos-5-yl)-L-homocysteine = (S)-4,5-dihydroxypentane-2,3-dione + L-homocysteine. In terms of biological role, involved in the synthesis of autoinducer 2 (AI-2) which is secreted by bacteria and is used to communicate both the cell density and the metabolic potential of the environment. The regulation of gene expression in response to changes in cell density is called quorum sensing. Catalyzes the transformation of S-ribosylhomocysteine (RHC) to homocysteine (HC) and 4,5-dihydroxy-2,3-pentadione (DPD). The protein is S-ribosylhomocysteine lyase of Streptococcus sanguinis (strain SK36).